Consider the following 365-residue polypeptide: tRNA/tmRNA (uracil-C(5))-methyltransferase (365 aa).

Positions 189, 217, 222, 238, and 298 each coordinate S-adenosyl-L-methionine. The Nucleophile role is filled by cysteine 323. The active-site Proton acceptor is the glutamate 357.

This sequence belongs to the class I-like SAM-binding methyltransferase superfamily. RNA M5U methyltransferase family. TrmA subfamily.

It catalyses the reaction uridine(54) in tRNA + S-adenosyl-L-methionine = 5-methyluridine(54) in tRNA + S-adenosyl-L-homocysteine + H(+). The enzyme catalyses uridine(341) in tmRNA + S-adenosyl-L-methionine = 5-methyluridine(341) in tmRNA + S-adenosyl-L-homocysteine + H(+). Dual-specificity methyltransferase that catalyzes the formation of 5-methyluridine at position 54 (m5U54) in all tRNAs, and that of position 341 (m5U341) in tmRNA (transfer-mRNA). This is tRNA/tmRNA (uracil-C(5))-methyltransferase from Shewanella amazonensis (strain ATCC BAA-1098 / SB2B).